Here is a 326-residue protein sequence, read N- to C-terminus: dTDP-4-dehydro-6-deoxy-D-allose reductase (326 aa).

Residues 15–21 (GALGFIG) and 129–132 (MSSS) each bind NAD(+). The Proton donor/acceptor role is filled by Tyr160. Residues Lys164 and 187–190 (PGNV) contribute to the NAD(+) site.

The protein belongs to the NAD(P)-dependent epimerase/dehydratase family.

It catalyses the reaction dTDP-6-deoxy-alpha-D-allose + NAD(+) = dTDP-4-dehydro-6-deoxy-alpha-D-allose + NADH + H(+). The catalysed reaction is dTDP-6-deoxy-alpha-D-allose + NADP(+) = dTDP-4-dehydro-6-deoxy-alpha-D-allose + NADPH + H(+). Functionally, catalyzes the stereospecific reduction of the C-4 keto group of dTDP-4-dehydro-6-deoxy-D-allose, leading to dTDP-6-deoxy-D-allose, an intermediate in the biosynthesis of the mycinose moiety of dihydrochalcomycin (GERI-155) antibiotic. Cannot directly reduce dTDP-4-dehydro-6-deoxyglucose, and thus acts after the epimerization step catalyzed by GerF. This chain is dTDP-4-dehydro-6-deoxy-D-allose reductase (gerKI), found in Streptomyces sp.